The chain runs to 402 residues: Hyaluronan and proteoglycan link protein 4 (402 aa).

The signal sequence occupies residues 1–29 (MVCARAALGPGALWAAAWGVLLLTAPAGA). The Ig-like C2-type domain occupies 46 to 161 (SVVVQTAPGQ…DAGMVKLDLE (116 aa)). 5 cysteine pairs are disulfide-bonded: Cys-68–Cys-143, Cys-185–Cys-266, Cys-209–Cys-230, Cys-293–Cys-363, and Cys-318–Cys-339. Asn-132 is a glycosylation site (N-linked (GlcNAc...) asparagine). Link domains are found at residues 163 to 268 (VVFP…FCFT) and 273 to 365 (GRVF…YCYR).

It belongs to the HAPLN family. As to expression, expressed predominantly in brain.

It localises to the secreted. Its subcellular location is the extracellular space. The protein resides in the extracellular matrix. Essential for the proper localization of brevican (BCAN), mainly as a perineuronal nets (PNNs)-type deposition in the brainstem and cerebellum thereby playing a key role in the formation and structural organization of PNNs. Contributes to the formation and transmission of inhibitory GABAergic synapses between Purkinje cells and deep cerebellar nuclei neurons. This is Hyaluronan and proteoglycan link protein 4 (HAPLN4) from Homo sapiens (Human).